The sequence spans 1222 residues: Protein SCP160 (1222 aa).

Polar residues predominate over residues 1–12; it reads MSEEQTAIDSPP. The disordered stretch occupies residues 1-59; it reads MSEEQTAIDSPPSTVEGSVETVTTIDSPSTTASTIAATAEEHPQLEKKPTPLPSLKDLP. Residues 13–38 show a composition bias toward low complexity; sequence STVEGSVETVTTIDSPSTTASTIAAT. Positions 39-49 are enriched in basic and acidic residues; that stretch reads AEEHPQLEKKP. Phosphothreonine is present on Thr50. Phosphoserine occurs at positions 54, 63, 85, 87, and 89. Residues 79 to 98 are disordered; that stretch reads KPAVSNSPSPSPSAPSLTTG. A KH 1 domain is found at 177-249; it reads PINAVIEVPS…ESVNLAKAKI (73 aa). Ser630 carries the post-translational modification Phosphoserine. 5 KH domains span residues 634–702, 712–771, 782–851, 861–929, and 939–1001; these read KSKM…KKYL, IITK…HEEL, GHKM…AKRV, FVTE…VEEI, and SVTK…EKKI. Residue Ser1112 is modified to Phosphoserine. The KH 7 domain occupies 1153 to 1216; it reads YAGYVWGADT…AGVEKAGEMV (64 aa).

Its subcellular location is the endoplasmic reticulum membrane. It localises to the nucleus membrane. Involved in the control of mitotic chromosome transmission. Required during cell division for faithful partitioning of the ER-nuclear envelope membranes which, in S.cerevisiae, enclose the duplicated chromosomes. The protein is Protein SCP160 (SCP160) of Saccharomyces cerevisiae (strain ATCC 204508 / S288c) (Baker's yeast).